We begin with the raw amino-acid sequence, 270 residues long: Formamidopyrimidine-DNA glycosylase (270 aa).

The active-site Schiff-base intermediate with DNA is the proline 2. Glutamate 3 (proton donor) is an active-site residue. Catalysis depends on lysine 58, which acts as the Proton donor; for beta-elimination activity. DNA is bound by residues histidine 91, arginine 110, and arginine 151. An FPG-type zinc finger spans residues 236 to 270 (LVYGRDGLPCPNCGRALKHATIGQRASVWCSHCQR). The Proton donor; for delta-elimination activity role is filled by arginine 260.

The protein belongs to the FPG family. In terms of assembly, monomer. Requires Zn(2+) as cofactor.

It catalyses the reaction Hydrolysis of DNA containing ring-opened 7-methylguanine residues, releasing 2,6-diamino-4-hydroxy-5-(N-methyl)formamidopyrimidine.. The enzyme catalyses 2'-deoxyribonucleotide-(2'-deoxyribose 5'-phosphate)-2'-deoxyribonucleotide-DNA = a 3'-end 2'-deoxyribonucleotide-(2,3-dehydro-2,3-deoxyribose 5'-phosphate)-DNA + a 5'-end 5'-phospho-2'-deoxyribonucleoside-DNA + H(+). Involved in base excision repair of DNA damaged by oxidation or by mutagenic agents. Acts as a DNA glycosylase that recognizes and removes damaged bases. Has a preference for oxidized purines, such as 7,8-dihydro-8-oxoguanine (8-oxoG). Has AP (apurinic/apyrimidinic) lyase activity and introduces nicks in the DNA strand. Cleaves the DNA backbone by beta-delta elimination to generate a single-strand break at the site of the removed base with both 3'- and 5'-phosphates. In Stenotrophomonas maltophilia (strain K279a), this protein is Formamidopyrimidine-DNA glycosylase.